The following is a 440-amino-acid chain: Trigger factor (440 aa).

One can recognise a PPIase FKBP-type domain in the interval Gly163 to Pro248.

Belongs to the FKBP-type PPIase family. Tig subfamily.

It is found in the cytoplasm. The enzyme catalyses [protein]-peptidylproline (omega=180) = [protein]-peptidylproline (omega=0). Involved in protein export. Acts as a chaperone by maintaining the newly synthesized protein in an open conformation. Functions as a peptidyl-prolyl cis-trans isomerase. In Verminephrobacter eiseniae (strain EF01-2), this protein is Trigger factor.